Here is a 424-residue protein sequence, read N- to C-terminus: Deoxyguanosinetriphosphate triphosphohydrolase-like protein (424 aa).

The disordered stretch occupies residues 1-27 (MYPYSDADAFRRQPERAKSSQLRTSAV). The segment covering 8–18 (DAFRRQPERAK) has biased composition (basic and acidic residues). The 151-residue stretch at 67–217 (RLTHSLEVAQ…MDFSDDIAYS (151 aa)) folds into the HD domain.

The protein belongs to the dGTPase family. Type 2 subfamily.

In Corynebacterium glutamicum (strain ATCC 13032 / DSM 20300 / JCM 1318 / BCRC 11384 / CCUG 27702 / LMG 3730 / NBRC 12168 / NCIMB 10025 / NRRL B-2784 / 534), this protein is Deoxyguanosinetriphosphate triphosphohydrolase-like protein (dgt).